Consider the following 78-residue polypeptide: Exodeoxyribonuclease 7 small subunit (78 aa).

This sequence belongs to the XseB family. In terms of assembly, heterooligomer composed of large and small subunits.

The protein localises to the cytoplasm. It catalyses the reaction Exonucleolytic cleavage in either 5'- to 3'- or 3'- to 5'-direction to yield nucleoside 5'-phosphates.. Functionally, bidirectionally degrades single-stranded DNA into large acid-insoluble oligonucleotides, which are then degraded further into small acid-soluble oligonucleotides. This Nocardia farcinica (strain IFM 10152) protein is Exodeoxyribonuclease 7 small subunit.